A 1024-amino-acid polypeptide reads, in one-letter code: Unconventional myosin-Ig (1024 aa).

In terms of domain architecture, Myosin motor spans 15 to 713; that stretch reads YGKPDFVLLD…TLVTLEQSRA (699 aa). 108-115 serves as a coordination point for ATP; sequence GESGAGKT. Positions 590-612 are actin-binding; that stretch reads MVALVENLASKEPFYVRCIKPNE. One can recognise an IQ domain in the interval 716 to 745; that stretch reads IPIIVLLLQKAWRGTLARWHCRRLRAIYTI. The 194-residue stretch at 830–1023 folds into the TH1 domain; sequence GLRQDWGCQR…RSTFTLLWPS (194 aa). The interval 999–1024 is disordered; it reads VEPRPEQPEPDFQSSRSTFTLLWPSH.

The protein belongs to the TRAFAC class myosin-kinesin ATPase superfamily. Myosin family. In terms of assembly, interacts with calmodulin; via its IQ motifs. In terms of tissue distribution, specifically expressed in hematopoietic cells. Detected in adult tissues of the immune system such as thymus, lymph nodes and spleen, but not in brain, lung, heart, liver, small intestine, testis and kidney (at protein level). Highly expressed in T-lymphocytes; constitutes the most highly expressed class I myosin in naive CD4 and CD8 T-cells. Also present in B-lymphocytes.

The protein localises to the cell membrane. It localises to the cell projection. The protein resides in the phagocytic cup. Its function is as follows. Unconventional myosin required during immune response for detection of rare antigen-presenting cells by regulating T-cell migration. Unconventional myosins are actin-based motor molecules with ATPase activity and serve in intracellular movements. Acts as a regulator of T-cell migration by generating membrane tension, enforcing cell-intrinsic meandering search, thereby enhancing detection of rare antigens during lymph-node surveillance, enabling pathogen eradication. Also required in B-cells, where it regulates different membrane/cytoskeleton-dependent processes. Involved in Fc-gamma receptor (Fc-gamma-R) phagocytosis. This is Unconventional myosin-Ig (Myo1g) from Mus musculus (Mouse).